The primary structure comprises 143 residues: Large ribosomal subunit protein uL15 (143 aa).

The disordered stretch occupies residues 1–52; that stretch reads MKLNTLAPAAGSKSAPKRLGRGIGSGLGKTSGKGHKGQKARSGGYHKVGFEG. The segment covering 21–31 has biased composition (gly residues); the sequence is RGIGSGLGKTS.

This sequence belongs to the universal ribosomal protein uL15 family. In terms of assembly, part of the 50S ribosomal subunit.

In terms of biological role, binds to the 23S rRNA. This is Large ribosomal subunit protein uL15 from Francisella tularensis subsp. tularensis (strain FSC 198).